Here is a 220-residue protein sequence, read N- to C-terminus: Type II restriction enzyme NspV (220 aa).

The catalysed reaction is Endonucleolytic cleavage of DNA to give specific double-stranded fragments with terminal 5'-phosphates.. In terms of biological role, a P subtype restriction enzyme that recognizes the double-stranded sequence 5'-TTCGAA-3' and cleaves after T-2. In Nostoc sp. (strain ATCC 29411 / PCC 7524), this protein is Type II restriction enzyme NspV.